We begin with the raw amino-acid sequence, 215 residues long: MVRIFLLYNILNSFLLSLVPKKLRTLFPLSWFDKTLHKNSPPSPSTMLPSPSSSSAPTKRIDPSELKRVFQMFDKNGDGRITKEELNDSLENLGIYIPDKDLTQMIHKIDANGDGCVDIDEFESLYSSIVDEHHNDGETEEEDMKDAFNVFDQDGDGFITVEELKSVMASLGLKQGKTLDGCKKMIMQVDADGDGRVNYKEFLQMMKGGGFSSSN.

The disordered stretch occupies residues 38–61; the sequence is KNSPPSPSTMLPSPSSSSAPTKRI. The span at 45–57 shows a compositional bias: low complexity; sequence STMLPSPSSSSAP. EF-hand domains lie at 61–96, 97–132, 139–174, and 177–212; these read IDPS…LGIY, IPDK…IVDE, TEEE…LGLK, and KTLD…GGFS. Ca(2+)-binding residues include Asp74, Asn76, Asp78, Arg80, Glu85, Asp110, Asn112, Asp114, Cys116, Glu121, Asp152, Asp154, Asp156, Glu163, Asp190, Asp192, Asp194, Arg196, and Glu201.

This sequence belongs to the calmodulin family.

In terms of biological role, potential calcium sensor. The sequence is that of Calmodulin-like protein 5 (CML5) from Arabidopsis thaliana (Mouse-ear cress).